The chain runs to 385 residues: Chaperone protein DnaJ (385 aa).

Positions 5-72 constitute a J domain; it reads DYYEVLGVGK…QKRAAYDQFG (68 aa). The tract at residues 26-48 is disordered; it reads RKLAMKHHPDRNQGDGAKASEEK. The segment covering 35-48 has biased composition (basic and acidic residues); it reads DRNQGDGAKASEEK. Residues 145 to 223 form a CR-type zinc finger; that stretch reads GKESQIRIPT…CNGAGKVKKQ (79 aa). Residues C158, C161, C175, C178, C197, C200, C211, and C214 each contribute to the Zn(2+) site. CXXCXGXG motif repeat units follow at residues 158-165, 175-182, 197-204, and 211-218; these read CDTCHGSG, CTTCHGAG, CPHCHGSG, and CTSCNGAG. Residues 362-385 are disordered; that stretch reads FRKGGDKHSPTSKSWTDRVKDLFK.

It belongs to the DnaJ family. In terms of assembly, homodimer. Zn(2+) serves as cofactor.

The protein localises to the cytoplasm. Its function is as follows. Participates actively in the response to hyperosmotic and heat shock by preventing the aggregation of stress-denatured proteins and by disaggregating proteins, also in an autonomous, DnaK-independent fashion. Unfolded proteins bind initially to DnaJ; upon interaction with the DnaJ-bound protein, DnaK hydrolyzes its bound ATP, resulting in the formation of a stable complex. GrpE releases ADP from DnaK; ATP binding to DnaK triggers the release of the substrate protein, thus completing the reaction cycle. Several rounds of ATP-dependent interactions between DnaJ, DnaK and GrpE are required for fully efficient folding. Also involved, together with DnaK and GrpE, in the DNA replication of plasmids through activation of initiation proteins. The polypeptide is Chaperone protein DnaJ (Leptothrix cholodnii (strain ATCC 51168 / LMG 8142 / SP-6) (Leptothrix discophora (strain SP-6))).